Consider the following 292-residue polypeptide: MPRAGVCGCWGGQVLPLLLAYICYLLLGATIFQLLEKQAEAQSRDQFQLEKLRFLENYTCLDQQALEQFVQVILEAWVKGVNPKGNSTNPSNWDFGSSFFFAGTVVTTIGYGNLAPSTEAGQVFCVFYALMGIPLNVVFLNHLGTGLRAHLTTLDRWEDHPRHSQLLQVLGLALFLTLGTLVILIFPPMFFSHVEGWSFREGFYFAFITLSTIGFGDYVVGTDPSKHYIAVYRSLAAIWILLGLAWLAVVLSLGSLLLHRCSRLWQLIRGLDLKDGAAPDSEPRSQKIPISA.

Topologically, residues 1-13 are cytoplasmic; the sequence is MPRAGVCGCWGGQ. Residues 14–34 form a helical membrane-spanning segment; that stretch reads VLPLLLAYICYLLLGATIFQL. The pore-forming intramembrane region spans 98 to 116; that stretch reads SFFFAGTVVTTIGYGNLAP. K(+)-binding residues include threonine 108, isoleucine 109, glycine 110, and tyrosine 111. The segment at 108-113 is selectivity filter 1; the sequence is TIGYGN. A helical membrane pass occupies residues 120-140; sequence AGQVFCVFYALMGIPLNVVFL. Residues 141-165 lie on the Cytoplasmic side of the membrane; it reads NHLGTGLRAHLTTLDRWEDHPRHSQ. The chain crosses the membrane as a helical span at residues 166–186; sequence LLQVLGLALFLTLGTLVILIF. An intramembrane region (pore-forming) is located at residues 202-221; sequence GFYFAFITLSTIGFGDYVVG. 4 residues coordinate K(+): threonine 212, isoleucine 213, glycine 214, and phenylalanine 215. Residues 212 to 217 are selectivity filter 2; the sequence is TIGFGD. Residues 238 to 258 form a helical membrane-spanning segment; that stretch reads IWILLGLAWLAVVLSLGSLLL. At 259–292 the chain is on the cytoplasmic side; the sequence is HRCSRLWQLIRGLDLKDGAAPDSEPRSQKIPISA.

This sequence belongs to the two pore domain potassium channel (TC 1.A.1.8) family. As to quaternary structure, homodimer; disulfide-linked. Heterodimer with KCNK17 and KCNK5. As to expression, expressed in pacreatic beta-cells (at protein level). Expressed in pacreatic delta-cells (at protein level).

The protein resides in the cell membrane. It is found in the endoplasmic reticulum membrane. It localises to the mitochondrion inner membrane. It carries out the reaction K(+)(in) = K(+)(out). It catalyses the reaction Rb(+)(in) = Rb(+)(out). The catalysed reaction is Cs(+)(in) = Cs(+)(out). Its function is as follows. K(+) channel that conducts voltage-dependent outward rectifying currents upon membrane depolarization. Voltage sensing is coupled to K(+) electrochemical gradient in an 'ion flux gating' mode where outward but not inward ion flow opens the gate. Homo- and heterodimerizes to form functional channels with distinct regulatory and gating properties. In pancreatic islets, conducts K(+) countercurrents for Ca(2+) release from the endoplasmic reticulum (ER) and regulates the frequency and duration of cytosolic Ca(2+) oscillations coupled to secretion of pancreatic hormones. In pancreatic beta cells, drives ER Ca(2+) efflux, which in turn activates Ca(2+)-dependent plasma membrane K(+) slow currents and cytosolic Ca(2+) influx, overall contributing to synchronous cytosolic Ca(2+) oscillations. Limits glucose-induced cytosolic Ca(2+) oscillations coupled to second-phase INS secretion. Contributes to beta cell adaptation to acute inflammation by maintaining normal cytosolic Ca(2+) levels and INS secretion. May regulate beta cell mitochondrial Ca(2+) levels either indirectly via ER Ca(2+) efflux or directly by hyperpolarizing the mitochondrial membrane potential. Limits mitochondrial Ca(2+) oscillations and ATP production involved in glucose homeostasis upon metabolic stress. In pancreatic delta cells, limits Ca(2+)-induced Ca(2+)-release involved in somatostatin secretion and modulates islet paracrine signaling involved in glucagon secretion. Permeable to other monovalent cations such as Rb(+) and Cs(+). The chain is Potassium channel, subfamily K, member 16 from Mus musculus (Mouse).